The sequence spans 454 residues: MRRPLRRVTVVLLWVALAIGVAWFYDYRRSMQSLWKIRQHGKIVVLTENNANSYYIYKETPMGFEYDLAKAFAGHLGVDLEVKTPGWDALFASLQRGDGDFIAASMTHTRKREQYADFSEPYLSVRQHLILHKSDHSIVTPAGLAGRTVHVREDTTYQQRLEALQADGIDLQLVLHRNTPTEELIEQVAKRQIDITVADSAIALLNRRYYPDIRIAFPIEKEQPLAWAVRKGDRGLRTEINRFFDEIKENGTFTRIYNRYYTAVDTFDYVDVKKFHQRIYTRLPRFRPLIEKAADRHGFDWQMIAAVIYQESHFDPFAQSHTGVKGLMQLTRVTAEEMGVTDRFDFEQNITAGVAYLAKLRHRFDDIEDPRTRLLFALASYNIGYGHVRDAQQIAKNMGMDPNRWQSLKEVLPLLRNREYYADTTYGYARGNEAVRYIERILTYYDILKQKKAV.

The signal sequence occupies residues 1 to 24 (MRRPLRRVTVVLLWVALAIGVAWF). Residues 25 to 265 (YDYRRSMQSL…IYNRYYTAVD (241 aa)) are non-LT domain. Residues 266–454 (TFDYVDVKKF…YDILKQKKAV (189 aa)) are LT domain. Glu-311 is an active-site residue.

It in the N-terminal section; belongs to the bacterial solute-binding protein 3 family. In the C-terminal section; belongs to the transglycosylase Slt family.

Its subcellular location is the cell outer membrane. It carries out the reaction Exolytic cleavage of the (1-&gt;4)-beta-glycosidic linkage between N-acetylmuramic acid (MurNAc) and N-acetylglucosamine (GlcNAc) residues in peptidoglycan, from either the reducing or the non-reducing ends of the peptidoglycan chains, with concomitant formation of a 1,6-anhydrobond in the MurNAc residue.. Its function is as follows. Murein-degrading enzyme that degrades murein glycan strands and insoluble, high-molecular weight murein sacculi, with the concomitant formation of a 1,6-anhydromuramoyl product. Lytic transglycosylases (LTs) play an integral role in the metabolism of the peptidoglycan (PG) sacculus. Their lytic action creates space within the PG sacculus to allow for its expansion as well as for the insertion of various structures such as secretion systems and flagella. This Desulfosudis oleivorans (strain DSM 6200 / JCM 39069 / Hxd3) (Desulfococcus oleovorans) protein is Membrane-bound lytic murein transglycosylase F.